The chain runs to 374 residues: O-methyltransferase acrG (374 aa).

Tyr19, Asn70, Asp96, Ser128, and Phe129 together coordinate S-adenosyl-L-homocysteine. Phe245 provides a ligand contact to Mg(2+).

Belongs to the methyltransferase superfamily. Type-7 methyltransferase family.

It functions in the pathway secondary metabolite biosynthesis. Its function is as follows. O-methyltransferase; part of the cluster that mediates the biosynthesis of acurin A, a highly reduced polyketide coupled to a serine via a peptide bond. The activities of the highly reducing polyketide synthase acrA and the nonribosomal peptide synthetase acrB are collectively responsible for the synthesis of the acurin A core structure with a heptaketide backbone produced by acrA covalently fused to a L-serine by acrB. After the formation of the PK-NRP hybrid product, it is detached from acrB by reductive release to set up the formation of the lactam ring by aldol condensation. The hydrolyase acrC then catalyzes water loss to generate a double bond in the ring. This double bond is probably reduced, which is followed by three oxidations at C-22 to generate the carboxylic acid moiety, involving probably the FAD-binding monooxygenase acrE and the cytochrome P450 monooxygenases acrD and acrF. Finally, a last methylation step performed by the O-methyltransferase acrG leads to the production of acurin A. The sequence is that of O-methyltransferase acrG from Aspergillus aculeatus (strain ATCC 16872 / CBS 172.66 / WB 5094).